Reading from the N-terminus, the 308-residue chain is GTP-binding protein RAD (308 aa).

Gly residues predominate over residues 1–15 (MTLNGGSGASGSRGA). The disordered stretch occupies residues 1 to 86 (MTLNGGSGAS…SDSLSSGGSG (86 aa)). The residue at position 24 (arginine 24) is an Omega-N-methylarginine. The residue at position 26 (serine 26) is a Phosphoserine. A compositionally biased stretch (low complexity) spans 57 to 82 (ATTAAGTRTQGQRLDWPEGSSDSLSS). Residues 98 to 105 (GAPGVGKS) and 203 to 206 (NKSD) contribute to the GTP site. Residues 278-297 (AKRFLGRIVARNSRKMAFRA) form a calmodulin-binding region.

The protein belongs to the small GTPase superfamily. RGK family. As to quaternary structure, interacts with Calmodulin preferentially in the inactive, GDP-bound form. Interacts with CAMK2D. Interacts with CACNB2; interaction may be involved in beta-adrenergic regulation of heart rate and contractile force. Interaction with CACNB2 regulates the trafficking of CACNA1C to the cell membrane. Phosphorylation at Ser-26, Ser-39, Ser-273 and Ser-301 may be involved in regulating inhibition of voltage-gated L-type Ca(2+) channels.

It localises to the cell membrane. May regulate basal voltage-dependent L-type Ca(2+) currents and be required for beta-adrenergic augmentation of Ca(2+) influx in cardiomyocytes, thereby regulating increases in heart rate and contractile force. May play an important role in cardiac antiarrhythmia via the strong suppression of voltage-dependent L-type Ca(2+) currents. Regulates voltage-gated L-type calcium channel subunit alpha-1C trafficking to the cell membrane. Inhibits cardiac hypertrophy through the calmodulin-dependent kinase II (CaMKII) pathway. Inhibits phosphorylation and activation of CAMK2D. In Mus musculus (Mouse), this protein is GTP-binding protein RAD (Rrad).